We begin with the raw amino-acid sequence, 280 residues long: 4-diphosphocytidyl-2-C-methyl-D-erythritol kinase (280 aa).

Residue K9 is part of the active site. 92–102 (PMGGGLGGGSS) serves as a coordination point for ATP. The active site involves D134.

This sequence belongs to the GHMP kinase family. IspE subfamily.

It catalyses the reaction 4-CDP-2-C-methyl-D-erythritol + ATP = 4-CDP-2-C-methyl-D-erythritol 2-phosphate + ADP + H(+). Its pathway is isoprenoid biosynthesis; isopentenyl diphosphate biosynthesis via DXP pathway; isopentenyl diphosphate from 1-deoxy-D-xylulose 5-phosphate: step 3/6. Its function is as follows. Catalyzes the phosphorylation of the position 2 hydroxy group of 4-diphosphocytidyl-2C-methyl-D-erythritol. The protein is 4-diphosphocytidyl-2-C-methyl-D-erythritol kinase of Nitrosococcus oceani (strain ATCC 19707 / BCRC 17464 / JCM 30415 / NCIMB 11848 / C-107).